The sequence spans 309 residues: Glutamyl-Q tRNA(Asp) synthetase (309 aa).

L-glutamate contacts are provided by residues 8 to 12 (RFSPS) and Glu44. The 'HIGH' region signature appears at 11–21 (PSPTGPLHAGS). Positions 100, 102, 126, and 130 each coordinate Zn(2+). Positions 205 and 223 each coordinate L-glutamate. A 'KMSKS' region motif is present at residues 261–265 (KLSKQ). Lys264 is an ATP binding site.

The protein belongs to the class-I aminoacyl-tRNA synthetase family. GluQ subfamily. Zn(2+) is required as a cofactor.

Catalyzes the tRNA-independent activation of glutamate in presence of ATP and the subsequent transfer of glutamate onto a tRNA(Asp). Glutamate is transferred on the 2-amino-5-(4,5-dihydroxy-2-cyclopenten-1-yl) moiety of the queuosine in the wobble position of the QUC anticodon. The polypeptide is Glutamyl-Q tRNA(Asp) synthetase (Albidiferax ferrireducens (strain ATCC BAA-621 / DSM 15236 / T118) (Rhodoferax ferrireducens)).